We begin with the raw amino-acid sequence, 767 residues long: Receptor-type tyrosine-protein phosphatase-like ida-1 (767 aa).

Positions 1 to 19 (MRFFHSIIVLLFSISTGSA) are cleaved as a signal peptide. Residues 20–398 (FLLYGCNLSE…SLPVESSERD (379 aa)) are Lumenal-facing. N-linked (GlcNAc...) asparagine glycosylation is found at asparagine 26 and asparagine 146. A helical membrane pass occupies residues 399 to 419 (WLLMPVLFVCAFTVTALGLVA). Topologically, residues 420 to 767 (AVQIARSRRH…NHLLKSIATK (348 aa)) are cytoplasmic. In terms of domain architecture, Tyrosine-protein phosphatase spans 527–756 (SQNRTILPFD…KLVYGCVAQE (230 aa)).

Belongs to the protein-tyrosine phosphatase family. Receptor class 8 subfamily. Proteolytically cleaved probably at a dibasic consensus sequence by egl-3. In terms of tissue distribution, in hermaphrodites specifically expressed in neurons and in particular in the head nerve ring (ADE, ALA, ASI, ASK, AUA, ASG, AVH and AVJ neurons), in the ventral nerve cord, pre-anal ganglia (PVP neuron), in the tail (PHA, PHB and PHC neurons) and in vulval motor neurons VC and HSN and the vulval uv1 cells. In males, also expressed in neurons anterior to the nerve ring and male-specific neurons in the tail.

The protein localises to the cytoplasmic vesicle membrane. The protein resides in the perikaryon. It is found in the cell projection. It localises to the axon. Its subcellular location is the dendrite. Functionally, regulates dense-core vesicle (DCV) trafficking and/or secretion. Probably by controlling DCV trafficking, plays a role in the AVG neuron-mediated formation of the right axon tract of the ventral nerve cord. Involved in locomotion by regulating acetylcholine release. Probably by controlling the secretion of FLP neuropeptides, regulates the turning step of male mating behavior. Plays a role in preventing dauer formation. The protein is Receptor-type tyrosine-protein phosphatase-like ida-1 of Caenorhabditis elegans.